We begin with the raw amino-acid sequence, 341 residues long: Phosphoribosylformylglycinamidine cyclo-ligase (341 aa).

The protein belongs to the AIR synthase family.

The protein resides in the cytoplasm. The enzyme catalyses 2-formamido-N(1)-(5-O-phospho-beta-D-ribosyl)acetamidine + ATP = 5-amino-1-(5-phospho-beta-D-ribosyl)imidazole + ADP + phosphate + H(+). The protein operates within purine metabolism; IMP biosynthesis via de novo pathway; 5-amino-1-(5-phospho-D-ribosyl)imidazole from N(2)-formyl-N(1)-(5-phospho-D-ribosyl)glycinamide: step 2/2. The protein is Phosphoribosylformylglycinamidine cyclo-ligase of Synechococcus elongatus (strain ATCC 33912 / PCC 7942 / FACHB-805) (Anacystis nidulans R2).